Reading from the N-terminus, the 405-residue chain is Argininosuccinate synthase (405 aa).

ATP-binding positions include 11 to 19 (AYSGGLDTS) and Ala38. L-citrulline is bound by residues Tyr91 and Ser96. Gly121 contacts ATP. Thr123, Asn127, and Asp128 together coordinate L-aspartate. An L-citrulline-binding site is contributed by Asn127. Residues Arg131, Ser182, Ser191, Glu267, and Tyr279 each coordinate L-citrulline.

It belongs to the argininosuccinate synthase family. Type 1 subfamily. As to quaternary structure, homotetramer.

The protein localises to the cytoplasm. The catalysed reaction is L-citrulline + L-aspartate + ATP = 2-(N(omega)-L-arginino)succinate + AMP + diphosphate + H(+). Its pathway is amino-acid biosynthesis; L-arginine biosynthesis; L-arginine from L-ornithine and carbamoyl phosphate: step 2/3. This chain is Argininosuccinate synthase, found in Sphingopyxis alaskensis (strain DSM 13593 / LMG 18877 / RB2256) (Sphingomonas alaskensis).